The chain runs to 574 residues: K(+)/H(+) antiporter NhaP2 (574 aa).

Helical transmembrane passes span 6-26 (INSFFLIGALLAAVSVLLSPV), 34-54 (ILLIFLAVGILAGEDGPGGIL), 58-78 (YSTAYLVSNLALAIILLDGGM), 87-107 (VALWPALSLATFGVAITTSIT), 109-129 (VMAAWLFDLHWLQGLLVGAIV), 173-193 (IAILANVDAELSVSFMLISFI), 196-216 (FGLGIFLGLGGGWLLWKLVNL), 219-239 (LAEGLYSILVLSGGLMIYAAS), 242-262 (LGGSGILSIYLVGLFLGNKPT), 271-291 (VLDGMTWVSQIGMFLVLGLLL), 299-319 (IWLPGLALAFGMILFARPLAV), 335-355 (WFISWVGLRGAVPIILAVFPM), and 359-379 (LPGAQLYFNLAFFVVLVSLLV). The RCK C-terminal domain occupies 405–486 (SGVEIYPSSE…LEALSNLFSQ (82 aa)).

Belongs to the monovalent cation:proton antiporter 1 (CPA1) transporter (TC 2.A.36) family. NhaP2 subfamily.

The protein localises to the cell inner membrane. It carries out the reaction K(+)(in) + H(+)(out) = K(+)(out) + H(+)(in). Functionally, k(+)/H(+) antiporter that extrudes potassium in exchange for external protons and maintains the internal concentration of potassium under toxic levels. In Shewanella sp. (strain ANA-3), this protein is K(+)/H(+) antiporter NhaP2.